We begin with the raw amino-acid sequence, 95 residues long: Small ribosomal subunit protein uS19 (95 aa).

The protein belongs to the universal ribosomal protein uS19 family.

Functionally, protein S19 forms a complex with S13 that binds strongly to the 16S ribosomal RNA. The polypeptide is Small ribosomal subunit protein uS19 (Coxiella burnetii (strain CbuK_Q154) (Coxiella burnetii (strain Q154))).